The primary structure comprises 82 residues: Conotoxin C11GB (82 aa).

Positions 1–22 (MKLTCVMIVAVLFLTAWTVVTA) are cleaved as a signal peptide. A propeptide spanning residues 23–53 (EPHSSNVLENLYLKAHHEMENPEASKLNTRD) is cleaved from the precursor. Disulfide bonds link Cys55-Cys72, Cys62-Cys76, and Cys71-Cys80.

Belongs to the conotoxin O1 superfamily. As to expression, expressed by the venom duct.

It is found in the secreted. This Conus vexillum (Flag cone) protein is Conotoxin C11GB.